The following is a 67-amino-acid chain: Beta-defensin 123 (67 aa).

The first 20 residues, 1-20, serve as a signal peptide directing secretion; sequence MKLLLLTLTVLLLLSQLTPG. Disulfide bonds link C25-C52, C32-C46, and C36-C53.

Belongs to the beta-defensin family.

The protein resides in the secreted. Functionally, has antibacterial activity. This Pongo pygmaeus (Bornean orangutan) protein is Beta-defensin 123 (DEFB123).